A 69-amino-acid chain; its full sequence is Disintegrin EMF10A (69 aa).

Positions methionine 1–glutamate 66 constitute a Disintegrin domain. 4 cysteine pairs are disulfide-bonded: cysteine 7/cysteine 30, cysteine 21/cysteine 27, cysteine 26/cysteine 51, and cysteine 39/cysteine 58. Residues arginine 43–aspartate 45 carry the Cell attachment site motif.

The protein belongs to the disintegrin family. Dimeric disintegrin subfamily. In terms of assembly, heterodimer with EMF10B; disulfide-linked. Expressed by the venom gland.

The protein localises to the secreted. Its function is as follows. Extremely potent and selective inhibitor of integrin alpha-5/beta-1 (ITGA5/ITGB1). Partially inhibits adhesion of cells expressing alpha-IIb/beta-3 (ITGA2B/ITGB3), alpha-V/beta-3 (ITGAV/ITGB3), and alpha-4/beta-1 (ITGA4/ITGB1) to appropriate ligands only at concentration higher than 500 nM. Weakly inhibits ADP-induced platelet aggregation. This Eristicophis macmahoni (Leaf-nosed viper) protein is Disintegrin EMF10A.